Here is a 269-residue protein sequence, read N- to C-terminus: Zinc transporter ZupT (269 aa).

A run of 8 helical transmembrane segments spans residues 12-32 (AFSITLAAGLFTVLGSGLVMF), 41-61 (LSFGLAFAGGAMVYVSLTEIF), 75-95 (DHAFAAATMAFLAGMGGIALI), 126-146 (MMAAFAITAHNFPEGLATFFA), 152-172 (AVGMPLALAIAIHNIPEGISI), 187-207 (VWACLLSGLAEPLGAALGYLV), 211-231 (FLSPAVFGSVFGVIAGVMVFL), and 249-269 (TVYGLTMGMAVIAVSLVLFHF). Asn136 and Glu139 together coordinate Fe(2+). The Zn(2+) site is built by Glu139 and His164. Fe(2+) is bound by residues Asn165, Glu168, and Glu197. Glu168 serves as a coordination point for Zn(2+).

This sequence belongs to the ZIP transporter (TC 2.A.5) family. ZupT subfamily.

It localises to the cell inner membrane. The enzyme catalyses Zn(2+)(in) = Zn(2+)(out). Functionally, mediates zinc uptake. May also transport other divalent cations. The chain is Zinc transporter ZupT from Neisseria meningitidis serogroup A / serotype 4A (strain DSM 15465 / Z2491).